The following is a 183-amino-acid chain: Translation initiation factor IF-3 (183 aa).

It belongs to the IF-3 family. In terms of assembly, monomer.

The protein resides in the cytoplasm. In terms of biological role, IF-3 binds to the 30S ribosomal subunit and shifts the equilibrium between 70S ribosomes and their 50S and 30S subunits in favor of the free subunits, thus enhancing the availability of 30S subunits on which protein synthesis initiation begins. The polypeptide is Translation initiation factor IF-3 (Azobacteroides pseudotrichonymphae genomovar. CFP2).